A 90-amino-acid chain; its full sequence is U7-theraphotoxin-Hhn1a 4 (90 aa).

An N-terminal signal peptide occupies residues 1–19; the sequence is MKTAIFTVVLALAVFAVLS. A propeptide spanning residues 20-50 is cleaved from the precursor; it reads FGWEANEEALSEEFTELIHEKEAASETEARE. Cystine bridges form between Cys51–Cys65, Cys58–Cys70, and Cys64–Cys81.

The protein belongs to the neurotoxin 10 (Hwtx-1) family. 13 (Hntx-13) subfamily. Expressed by the venom gland.

It is found in the secreted. Its function is as follows. Ion channel inhibitor. This Cyriopagopus hainanus (Chinese bird spider) protein is U7-theraphotoxin-Hhn1a 4.